A 102-amino-acid chain; its full sequence is Outer membrane protein assembly factor BamE (102 aa).

The N-terminal stretch at 1-20 (MNNYIKALLIIICFSSCSIS) is a signal peptide.

This sequence belongs to the BamE family. As to quaternary structure, part of the Bam complex.

It is found in the cell outer membrane. Functionally, part of the outer membrane protein assembly complex, which is involved in assembly and insertion of beta-barrel proteins into the outer membrane. The protein is Outer membrane protein assembly factor BamE of Buchnera aphidicola subsp. Acyrthosiphon pisum (strain APS) (Acyrthosiphon pisum symbiotic bacterium).